We begin with the raw amino-acid sequence, 66 residues long: Large ribosomal subunit protein bL35 (66 aa).

The protein belongs to the bacterial ribosomal protein bL35 family.

This Borreliella burgdorferi (strain ATCC 35210 / DSM 4680 / CIP 102532 / B31) (Borrelia burgdorferi) protein is Large ribosomal subunit protein bL35.